Reading from the N-terminus, the 385-residue chain is uncharacterized protein (385 aa).

N6-(pyridoxal phosphate)lysine is present on Lys-194.

It belongs to the class-V pyridoxal-phosphate-dependent aminotransferase family. Pyridoxal 5'-phosphate is required as a cofactor.

This is an uncharacterized protein from Methanocaldococcus jannaschii (strain ATCC 43067 / DSM 2661 / JAL-1 / JCM 10045 / NBRC 100440) (Methanococcus jannaschii).